A 301-amino-acid chain; its full sequence is Probable serine acetyltransferase 3 (301 aa).

Residues 280–301 form a disordered region; the sequence is IGKKAEPQRELPGVTMEQRWSD.

It belongs to the transferase hexapeptide repeat family. In terms of assembly, homomultimer.

The enzyme catalyses L-serine + acetyl-CoA = O-acetyl-L-serine + CoA. Its pathway is amino-acid biosynthesis; L-cysteine biosynthesis; L-cysteine from L-serine: step 1/2. The polypeptide is Probable serine acetyltransferase 3 (SAT3) (Oryza sativa subsp. japonica (Rice)).